The primary structure comprises 358 residues: MAVTSSSSTCDGFFIISLIVIVSSLFGTSSAQLNATFYSGTCPNASAIVRSTIQQALQSDARIGGSLIRLHFHDCFVNGCDGSLLLDDTSSIQSEKNAPANANSTRGFNVVDSIKTALENACPGIVSCSDILALASEASVSLAGGPSWTVLLGRRDGLTANLSGANSSLPSPFEGLNNITSKFVAVGLKTTDVVSLSGAHTFGRGQCVTFNNRLFNFNGTGNPDPTLNSTLLSSLQQLCPQNGSNTGITNLDLSTPDAFDNNYFTNLQSNNGLLQSDQELFSNTGSATVPIVNSFASNQTLFFEAFVQSMIKMGNISPLTGSSGEIRQDCKVVNGQSSATEAGDIQLQSDGPVSVADM.

Positions 1–31 (MAVTSSSSTCDGFFIISLIVIVSSLFGTSSA) are cleaved as a signal peptide. The residue at position 32 (Gln-32) is a Pyrrolidone carboxylic acid. Residues Asn-34 and Asn-44 are each glycosylated (N-linked (GlcNAc...) asparagine). Intrachain disulfides connect Cys-42–Cys-122, Cys-75–Cys-80, Cys-128–Cys-330, and Cys-207–Cys-239. The active-site Proton acceptor is His-73. Ca(2+) is bound by residues Asp-74, Val-77, Gly-79, Asp-81, and Ser-83. Asn-103, Asn-161, and Asn-166 each carry an N-linked (GlcNAc...) asparagine glycan. Substrate is bound at residue Pro-170. A glycan (N-linked (GlcNAc...) asparagine) is linked at Asn-178. Residue His-200 coordinates heme b. Thr-201 contributes to the Ca(2+) binding site. Asn-218, Asn-228, and Asn-242 each carry an N-linked (GlcNAc...) asparagine glycan. Positions 252, 255, and 260 each coordinate Ca(2+). N-linked (GlcNAc...) asparagine glycosylation is present at Asn-298.

Belongs to the peroxidase family. Classical plant (class III) peroxidase subfamily. Heme b serves as cofactor. Requires Ca(2+) as cofactor.

Its subcellular location is the secreted. It localises to the vacuole. The enzyme catalyses 2 a phenolic donor + H2O2 = 2 a phenolic radical donor + 2 H2O. Functionally, removal of H(2)O(2), oxidation of toxic reductants, biosynthesis and degradation of lignin, suberization, auxin catabolism, response to environmental stresses such as wounding, pathogen attack and oxidative stress. These functions might be dependent on each isozyme/isoform in each plant tissue. In Arabidopsis thaliana (Mouse-ear cress), this protein is Peroxidase 54 (PER54).